The sequence spans 344 residues: UDP-N-acetylenolpyruvoylglucosamine reductase (344 aa).

The region spanning 15-185 (LPACANQIIE…ISVGLKLAKA (171 aa)) is the FAD-binding PCMH-type domain. Residue arginine 161 is part of the active site. The active-site Proton donor is serine 231. Glutamate 327 is an active-site residue.

It belongs to the MurB family. The cofactor is FAD.

It is found in the cytoplasm. It catalyses the reaction UDP-N-acetyl-alpha-D-muramate + NADP(+) = UDP-N-acetyl-3-O-(1-carboxyvinyl)-alpha-D-glucosamine + NADPH + H(+). The protein operates within cell wall biogenesis; peptidoglycan biosynthesis. Its function is as follows. Cell wall formation. The protein is UDP-N-acetylenolpyruvoylglucosamine reductase of Haemophilus ducreyi (strain 35000HP / ATCC 700724).